Consider the following 213-residue polypeptide: MIAGVVVARNAREAVAKIREGNADLYEVRLDRFESFELAPLKPFADRLIITIRRAEEGGFRRIPEEERLELYRRAMTLKPRYVDVEARSEIAGEVMREARKRRVGVILSHHDFEGTPPFETLMEILQGMASMAPDVVKIVPTANSHLDNVRVLRLYEHAENLVAFCMGPLGRISRLFSALLAPFTYASLEKAVAPGQMSVEELRQLLVMLDGR.

3-dehydroquinate-binding positions include 27-29 and R53; that span reads EVR. Catalysis depends on H111, which acts as the Proton donor/acceptor. K138 acts as the Schiff-base intermediate with substrate in catalysis. The 3-dehydroquinate site is built by R175 and Q197.

This sequence belongs to the type-I 3-dehydroquinase family. As to quaternary structure, homodimer.

The enzyme catalyses 3-dehydroquinate = 3-dehydroshikimate + H2O. Its pathway is metabolic intermediate biosynthesis; chorismate biosynthesis; chorismate from D-erythrose 4-phosphate and phosphoenolpyruvate: step 3/7. Involved in the third step of the chorismate pathway, which leads to the biosynthesis of aromatic amino acids. Catalyzes the cis-dehydration of 3-dehydroquinate (DHQ) and introduces the first double bond of the aromatic ring to yield 3-dehydroshikimate. The protein is 3-dehydroquinate dehydratase of Thermococcus gammatolerans (strain DSM 15229 / JCM 11827 / EJ3).